Reading from the N-terminus, the 177-residue chain is Probable prophage lysozyme (177 aa).

The active-site Proton donor is Glu-35. Asp-44 acts as the Nucleophile in catalysis.

This sequence belongs to the glycosyl hydrolase 24 family.

It carries out the reaction Hydrolysis of (1-&gt;4)-beta-linkages between N-acetylmuramic acid and N-acetyl-D-glucosamine residues in a peptidoglycan and between N-acetyl-D-glucosamine residues in chitodextrins.. Functionally, essential for lysis of bacterial cell wall, by showing cell wall hydrolyzing activity. The chain is Probable prophage lysozyme (rrrQ) from Escherichia coli (strain K12).